The sequence spans 354 residues: Nicotinate-nucleotide--dimethylbenzimidazole phosphoribosyltransferase (354 aa).

The active-site Proton acceptor is the E319.

It belongs to the CobT family.

It catalyses the reaction 5,6-dimethylbenzimidazole + nicotinate beta-D-ribonucleotide = alpha-ribazole 5'-phosphate + nicotinate + H(+). It participates in nucleoside biosynthesis; alpha-ribazole biosynthesis; alpha-ribazole from 5,6-dimethylbenzimidazole: step 1/2. Its function is as follows. Catalyzes the synthesis of alpha-ribazole-5'-phosphate from nicotinate mononucleotide (NAMN) and 5,6-dimethylbenzimidazole (DMB). The protein is Nicotinate-nucleotide--dimethylbenzimidazole phosphoribosyltransferase of Pelodictyon phaeoclathratiforme (strain DSM 5477 / BU-1).